The primary structure comprises 461 residues: Deoxyguanosinetriphosphate triphosphohydrolase-like protein (461 aa).

The tract at residues 22–41 (ERFLPDPPREKDNRPPFRRD) is disordered. Residues 24-41 (FLPDPPREKDNRPPFRRD) show a composition bias toward basic and acidic residues. An HD domain is found at 72-285 (RLTHSLEVAQ…MELADDIAYG (214 aa)).

This sequence belongs to the dGTPase family. Type 2 subfamily.

This chain is Deoxyguanosinetriphosphate triphosphohydrolase-like protein, found in Haemophilus influenzae (strain PittGG).